A 467-amino-acid polypeptide reads, in one-letter code: Asparagine--tRNA ligase (467 aa).

Belongs to the class-II aminoacyl-tRNA synthetase family. Homodimer.

The protein localises to the cytoplasm. The catalysed reaction is tRNA(Asn) + L-asparagine + ATP = L-asparaginyl-tRNA(Asn) + AMP + diphosphate + H(+). The protein is Asparagine--tRNA ligase of Histophilus somni (strain 2336) (Haemophilus somnus).